The following is a 279-amino-acid chain: Energy-coupling factor transporter ATP-binding protein EcfA2 (279 aa).

The region spanning 3–245 (ITLKNVSYTY…LDFMESIQLG (243 aa)) is the ABC transporter domain. ATP is bound at residue 40–47 (GHTGSGKS).

It belongs to the ABC transporter superfamily. Energy-coupling factor EcfA family. Forms a stable energy-coupling factor (ECF) transporter complex composed of 2 membrane-embedded substrate-binding proteins (S component), 2 ATP-binding proteins (A component) and 2 transmembrane proteins (T component).

It is found in the cell membrane. In terms of biological role, ATP-binding (A) component of a common energy-coupling factor (ECF) ABC-transporter complex. Unlike classic ABC transporters this ECF transporter provides the energy necessary to transport a number of different substrates. This Streptococcus sanguinis (strain SK36) protein is Energy-coupling factor transporter ATP-binding protein EcfA2.